We begin with the raw amino-acid sequence, 435 residues long: Tol-Pal system protein TolB (435 aa).

An N-terminal signal peptide occupies residues Met-1–Ala-20.

It belongs to the TolB family. In terms of assembly, the Tol-Pal system is composed of five core proteins: the inner membrane proteins TolA, TolQ and TolR, the periplasmic protein TolB and the outer membrane protein Pal. They form a network linking the inner and outer membranes and the peptidoglycan layer.

Its subcellular location is the periplasm. Functionally, part of the Tol-Pal system, which plays a role in outer membrane invagination during cell division and is important for maintaining outer membrane integrity. The protein is Tol-Pal system protein TolB of Francisella tularensis subsp. holarctica (strain LVS).